A 436-amino-acid polypeptide reads, in one-letter code: Tol-Pal system protein TolB (436 aa).

Positions 1 to 28 are cleaved as a signal peptide; the sequence is MMKCSFFRAILVAVGLMAAAVVATPANA.

Belongs to the TolB family. The Tol-Pal system is composed of five core proteins: the inner membrane proteins TolA, TolQ and TolR, the periplasmic protein TolB and the outer membrane protein Pal. They form a network linking the inner and outer membranes and the peptidoglycan layer.

The protein resides in the periplasm. Part of the Tol-Pal system, which plays a role in outer membrane invagination during cell division and is important for maintaining outer membrane integrity. In Rhizobium etli (strain CIAT 652), this protein is Tol-Pal system protein TolB.